Here is a 204-residue protein sequence, read N- to C-terminus: Large ribosomal subunit protein bL25 (204 aa).

S123 is subject to Phosphoserine.

This sequence belongs to the bacterial ribosomal protein bL25 family. CTC subfamily. Part of the 50S ribosomal subunit; part of the 5S rRNA/L5/L18/L25 subcomplex. Contacts the 5S rRNA. Binds to the 5S rRNA independently of L5 and L18.

Functionally, this is one of the proteins that binds to the 5S RNA in the ribosome where it forms part of the central protuberance. This is Large ribosomal subunit protein bL25 from Pseudomonas aeruginosa (strain UCBPP-PA14).